The chain runs to 338 residues: Calcium uniporter protein 4, mitochondrial (338 aa).

The N-terminal 36 residues, 1 to 36, are a transit peptide targeting the mitochondrion; it reads MVMMKKLLSNRLFNMSKTASQSLMNCRTSSSSSLAM. The chain crosses the membrane as a helical span at residues 233-253; the sequence is LWAGLGYLIIQTAGFMRLTFW. A Selectivity filter motif is present at residues 257–265; that stretch reads WDVMEPICF. Glutamate 261 provides a ligand contact to Ca(2+). Residues 263-280 form a helical membrane-spanning segment; the sequence is ICFYVSSVYFMAGYTFFL.

Belongs to the MCU (TC 1.A.77) family.

It localises to the mitochondrion inner membrane. The enzyme catalyses Ca(2+)(in) = Ca(2+)(out). Its function is as follows. Mitochondrial inner membrane calcium uniporter that mediates calcium uptake into mitochondria. Constitutes a pore-forming and calcium-conducting subunit. Mitochondrial calcium homeostasis plays key roles in cellular physiology and regulates cell bioenergetics, cytoplasmic calcium signals and activation of cell death pathways. The polypeptide is Calcium uniporter protein 4, mitochondrial (Arabidopsis thaliana (Mouse-ear cress)).